The chain runs to 310 residues: MNPLYQKHIISINDLSREELELVLDTAAKLKANPQPELLKHKVIASCFFEASTRTRLSFETSMHRLGASVVGFSDSSNTSLGKKGETLADTISVISTYVDAIVMRHPQEGAARLATEFSGGIPILNAGDGANQHPTQTLLDLFTIQETQGQLENLNIAMVGDLKYGRTVHSLAQALAKFNGNRFYFIAPTALAMPQYILDMLDEKGITWSQHASIEEVMGEVDILYMTRVQKERLDPSEYANVKAQFVLRASDLEGARTNMKVLHPLPRIDEIATDVDKTPHAWYFQQAGNGIFARQALLALVLNRELAL.

Positions 54 and 55 each coordinate carbamoyl phosphate. K84 is an L-aspartate binding site. Residues R105, H134, and Q137 each coordinate carbamoyl phosphate. L-aspartate-binding residues include R167 and R229. Carbamoyl phosphate is bound by residues L267 and P268.

It belongs to the aspartate/ornithine carbamoyltransferase superfamily. ATCase family. In terms of assembly, heterododecamer (2C3:3R2) of six catalytic PyrB chains organized as two trimers (C3), and six regulatory PyrI chains organized as three dimers (R2).

The catalysed reaction is carbamoyl phosphate + L-aspartate = N-carbamoyl-L-aspartate + phosphate + H(+). Its pathway is pyrimidine metabolism; UMP biosynthesis via de novo pathway; (S)-dihydroorotate from bicarbonate: step 2/3. Its function is as follows. Catalyzes the condensation of carbamoyl phosphate and aspartate to form carbamoyl aspartate and inorganic phosphate, the committed step in the de novo pyrimidine nucleotide biosynthesis pathway. This chain is Aspartate carbamoyltransferase catalytic subunit, found in Enterobacter sp. (strain 638).